The chain runs to 59 residues: Large ribosomal subunit protein uL30 (59 aa).

It belongs to the universal ribosomal protein uL30 family. In terms of assembly, part of the 50S ribosomal subunit.

In Clostridium beijerinckii (strain ATCC 51743 / NCIMB 8052) (Clostridium acetobutylicum), this protein is Large ribosomal subunit protein uL30.